Here is a 1202-residue protein sequence, read N- to C-terminus: Probable DNA polymerase (1202 aa).

This sequence belongs to the DNA polymerase type-B family.

It is found in the mitochondrion. The enzyme catalyses DNA(n) + a 2'-deoxyribonucleoside 5'-triphosphate = DNA(n+1) + diphosphate. In Ascobolus immersus, this protein is Probable DNA polymerase.